We begin with the raw amino-acid sequence, 2144 residues long: Cadherin EGF LAG seven-pass G-type receptor 2 (2144 aa).

4 consecutive Cadherin domains span residues 1–40, 41–146, 147–248, and 253–371; these read EDQV…APQF, LRDS…PPVF, EQDE…PPVL, and ILFN…SPLL. The Extracellular portion of the chain corresponds to 1–1605; that stretch reads EDQVSYTLAI…GEILPLKTLT (1605 aa). N261, N301, N407, and N437 each carry an N-linked (GlcNAc...) asparagine glycan. The region spanning 453–511 is the EGF-like 1; calcium-binding domain; it reads DDNICLREPCENYMRCVSVLRFDSSAPFIASSSVLFRPIHPVGGLRCRCPPGFTGDYCE. 9 disulfides stabilise this stretch: C457–C468, C462–C499, C501–C510, C517–C528, C522–C537, C539–C548, C557–C568, C562–C578, and C580–C590. The EGF-like 2; calcium-binding domain maps to 513–549; it reads EVDLCYSRPCGPHGHCRSREGGYTCLCRDGYTGEHCE. The EGF-like 3; calcium-binding domain occupies 553 to 591; that stretch reads RSGRCTPGVCKNGGTCVNLLVGGFKCDCPSGDFEKPFCQ. A Laminin G-like 1 domain is found at 592-796; the sequence is VTTRSFPARS…IANNGTVPGC (205 aa). N726 and N790 each carry an N-linked (GlcNAc...) asparagine glycan. 4 cysteine pairs are disulfide-bonded: C770/C796, C803/C814, C808/C823, and C825/C834. Residues 799–835 enclose the EGF-like 4; calcium-binding domain; it reads KKNVCDSNTCHNGGTCVNQWDAFSCECPLGFGGKSCA. Residue N816 is modified to (3R)-3-hydroxyasparagine. The Laminin G-like 2 domain occupies 839 to 1016; it reads ANPQRFLGSS…GESINVEPGC (178 aa). N966 carries an N-linked (GlcNAc...) asparagine glycan. Cystine bridges form between C986–C1016, C1022–C1033, C1027–C1042, C1044–C1053, C1057–C1068, C1062–C1080, C1082–C1091, C1112–C1124, C1114–C1131, C1133–C1146, C1149–C1161, C1151–C1168, C1170–C1179, and C1182–C1194. Residues 1018–1053 form the EGF-like 5; calcium-binding domain; that stretch reads WPDPCDSNPCPTNSYCSNDWDSYSCSCDPGYYGDNC. (3R)-3-hydroxyasparagine is present on N1035. Residue N1052 is glycosylated (N-linked (GlcNAc...) asparagine). The EGF-like 6; calcium-binding domain maps to 1054–1092; sequence TNVCDLNPCEHQSACTRKPSAPHGYICECLPNYLGPYCE. One can recognise an EGF-like 7; calcium-binding domain in the interval 1108 to 1147; it reads TCGPCNCDVSKGFDPDCNKTSGECHCKENHYRPPSSPTCL. An N-linked (GlcNAc...) asparagine glycan is attached at N1125. The Laminin EGF-like domain maps to 1149–1196; that stretch reads CDCYPTGSLSRVCDPEDGQCPCKPGVIGRQCDRCDNPFAEVTTNGCEV. N-linked (GlcNAc...) asparagine glycans are attached at residues N1249, N1268, and N1286. A GAIN-B domain is found at 1424–1594; sequence ETTVILPESV…AVLMDVSRRE (171 aa). Residues 1439–1466 are disordered; it reads PMVRSAGPGEAQETEELARRQRRHPELS. 2 disulfides stabilise this stretch: C1544–C1576 and C1564–C1578. The segment at 1544-1594 is GPS; it reads CVFWNHSILVSGTGGWSARGCEVVFRNESHVSCQCNHMTSFAVLMDVSRRE. N1548 and N1570 each carry an N-linked (GlcNAc...) asparagine glycan. Residues 1606–1626 traverse the membrane as a helical segment; sequence YVALGVTLAALMITFLFLTLL. The Cytoplasmic segment spans residues 1627-1641; it reads RALRSNQHGIRRNLT. The chain crosses the membrane as a helical span at residues 1642–1662; that stretch reads AALGLAQLVFLLGINQADLPF. A topological domain (extracellular) is located at residue A1663. A helical membrane pass occupies residues 1664–1684; that stretch reads CTVIAILLHFLYLCTFSWALL. At 1685–1705 the chain is on the cytoplasmic side; sequence EALHLYRALTEVRDVNASPMR. Residues 1706–1726 form a helical membrane-spanning segment; sequence FYYMLGWGVPAFITGLAVGLD. Over 1727–1744 the chain is Extracellular; the sequence is PEGYGNPDFCWLSIYDTL. Residues 1745 to 1765 traverse the membrane as a helical segment; that stretch reads IWSFAGPVAFAVSMSVFLYIL. The Cytoplasmic segment spans residues 1766-1789; the sequence is SARASCAAQRQGFEKKGPVSGLRS. A helical membrane pass occupies residues 1790–1810; sequence SFTVLLLLSATWLLALLSVNS. At 1811–1816 the chain is on the extracellular side; that stretch reads DTLLFH. The helical transmembrane segment at 1817–1837 threads the bilayer; that stretch reads YLFAACNCVQGPFIFLSYVVL. The Cytoplasmic portion of the chain corresponds to 1838 to 2144; the sequence is SKEVRKALKF…SEFLFFNFLH (307 aa). Positions 1914–2109 are disordered; that stretch reads TLNPGQVPPG…PPRPPPRQSL (196 aa). Residues 1943-1955 show a composition bias toward acidic residues; sequence TDSDSDLSLEDDQ. Residues 2016–2025 are compositionally biased toward polar residues; that stretch reads GTTTKENSGS. Residues 2028–2040 show a composition bias toward basic and acidic residues; the sequence is LEERPRENGDALT. Residues 2082 to 2095 are compositionally biased toward polar residues; it reads GTGSSRGSTASEGS.

This sequence belongs to the G-protein coupled receptor 2 family. LN-TM7 subfamily. In terms of assembly, heterodimer of 2 chains generated by proteolytic processing; the large extracellular N-terminal fragment and the membrane-bound C-terminal fragment predominantly remain associated and non-covalently linked. The iron and 2-oxoglutarate dependent 3-hydroxylation of aspartate and asparagine is (R) stereospecific within EGF domains. In terms of processing, autoproteolytically processed at the GPS region of the GAIN-B domain; this cleavage modulates receptor activity. In terms of tissue distribution, expressed in the brain. High expression in cerebellum and olfactory bulb. Weaker expression in cerebral cortex, hippocampus and brain stem.

The protein localises to the cell membrane. Receptor that may have an important role in cell/cell signaling during nervous system formation. The protein is Cadherin EGF LAG seven-pass G-type receptor 2 of Rattus norvegicus (Rat).